Here is a 484-residue protein sequence, read N- to C-terminus: Glutamate--tRNA ligase (484 aa).

Positions 11–21 (PSPTGLLHIGN) match the 'HIGH' region motif. Positions 255–259 (KLSKR) match the 'KMSKS' region motif. Lys-258 is an ATP binding site.

Belongs to the class-I aminoacyl-tRNA synthetase family. Glutamate--tRNA ligase type 1 subfamily. In terms of assembly, monomer.

The protein localises to the cytoplasm. The enzyme catalyses tRNA(Glu) + L-glutamate + ATP = L-glutamyl-tRNA(Glu) + AMP + diphosphate. Its function is as follows. Catalyzes the attachment of glutamate to tRNA(Glu) in a two-step reaction: glutamate is first activated by ATP to form Glu-AMP and then transferred to the acceptor end of tRNA(Glu). This chain is Glutamate--tRNA ligase, found in Streptococcus agalactiae serotype V (strain ATCC BAA-611 / 2603 V/R).